A 339-amino-acid polypeptide reads, in one-letter code: Tetraacyldisaccharide 4'-kinase (339 aa).

58–65 (TVGGSGKT) provides a ligand contact to ATP.

The protein belongs to the LpxK family.

It catalyses the reaction a lipid A disaccharide + ATP = a lipid IVA + ADP + H(+). The protein operates within glycolipid biosynthesis; lipid IV(A) biosynthesis; lipid IV(A) from (3R)-3-hydroxytetradecanoyl-[acyl-carrier-protein] and UDP-N-acetyl-alpha-D-glucosamine: step 6/6. Functionally, transfers the gamma-phosphate of ATP to the 4'-position of a tetraacyldisaccharide 1-phosphate intermediate (termed DS-1-P) to form tetraacyldisaccharide 1,4'-bis-phosphate (lipid IVA). In Shewanella baltica (strain OS195), this protein is Tetraacyldisaccharide 4'-kinase.